Here is a 493-residue protein sequence, read N- to C-terminus: ATP synthase subunit beta, chloroplastic (493 aa).

Residue 170–177 participates in ATP binding; sequence GGAGVGKT.

This sequence belongs to the ATPase alpha/beta chains family. F-type ATPases have 2 components, CF(1) - the catalytic core - and CF(0) - the membrane proton channel. CF(1) has five subunits: alpha(3), beta(3), gamma(1), delta(1), epsilon(1). CF(0) has four main subunits: a(1), b(1), b'(1) and c(9-12).

It localises to the plastid. The protein localises to the chloroplast thylakoid membrane. The enzyme catalyses ATP + H2O + 4 H(+)(in) = ADP + phosphate + 5 H(+)(out). In terms of biological role, produces ATP from ADP in the presence of a proton gradient across the membrane. The catalytic sites are hosted primarily by the beta subunits. The sequence is that of ATP synthase subunit beta, chloroplastic from Chaetosphaeridium globosum (Charophycean green alga).